A 256-amino-acid chain; its full sequence is Cilia- and flagella-associated protein 410 (256 aa).

3 LRR repeats span residues 19–40 (SVRKLNCWGSRLTDISICQEMP), 41–62 (SLEVITLSVNSISTLEPVSRCQ), and 63–84 (RLSELYLRRNRIPSLAELFYLK). The 41-residue stretch at 97 to 137 (NPCCGTSPHRYRMTVLRTLPRLQKLDNQAVTEEELSRALSE) folds into the LRRCT domain. Disordered stretches follow at residues 129 to 156 (EELSRALSEGEEITAAPEREGTGHGGPK) and 168 to 212 (AETG…SSHR). Phosphoserine is present on residues serine 136 and serine 177.

As to quaternary structure, found in a complex with CFAP410, NEK1 and SPATA7. Interacts with NEK1. In terms of tissue distribution, widely expressed. Expressed in the retina.

The protein resides in the mitochondrion. Its subcellular location is the cytoplasm. It is found in the cytoskeleton. It localises to the cilium basal body. The protein localises to the cell projection. The protein resides in the cilium. Its subcellular location is the photoreceptor outer segment. Its function is as follows. Plays a role in cilia formation and/or maintenance. Plays a role in the regulation of cell morphology and cytoskeletal organization. Involved in DNA damage repair. The sequence is that of Cilia- and flagella-associated protein 410 from Homo sapiens (Human).